A 300-amino-acid chain; its full sequence is Ribosomal RNA small subunit methyltransferase H (300 aa).

S-adenosyl-L-methionine is bound by residues 46-48, aspartate 65, phenylalanine 92, aspartate 107, and glutamine 114; that span reads GGH.

This sequence belongs to the methyltransferase superfamily. RsmH family.

It localises to the cytoplasm. The catalysed reaction is cytidine(1402) in 16S rRNA + S-adenosyl-L-methionine = N(4)-methylcytidine(1402) in 16S rRNA + S-adenosyl-L-homocysteine + H(+). Specifically methylates the N4 position of cytidine in position 1402 (C1402) of 16S rRNA. This is Ribosomal RNA small subunit methyltransferase H from Prochlorococcus marinus subsp. pastoris (strain CCMP1986 / NIES-2087 / MED4).